Consider the following 627-residue polypeptide: ATP-dependent zinc metalloprotease FtsH 2 (627 aa).

Over 1-7 the chain is Cytoplasmic; sequence MKFSWRT. A helical transmembrane segment spans residues 8–28; sequence ALLWSLPLLVVGFFFWQGSFG. Residues 29–117 lie on the Lumenal side of the membrane; it reads GADANLGSNT…SHPVRNNGMV (89 aa). A helical membrane pass occupies residues 118–138; it reads WGFVGNLIFPVLLIASLFFLF. At 139-627 the chain is on the cytoplasmic side; the sequence is RRSSNMPGGP…PVKEQLIPQL (489 aa). 212–219 lines the ATP pocket; that stretch reads GPPGTGKT. Residue H433 coordinates Zn(2+). Residue E434 is part of the active site. Zn(2+)-binding residues include H437 and D511.

It in the central section; belongs to the AAA ATPase family. The protein in the C-terminal section; belongs to the peptidase M41 family. In terms of assembly, homohexamer (Potential). Part of a large (&gt;500 kDa) complex that includes FtsH3 and PSII. Coimmunoprecipitates with YidC. Zn(2+) serves as cofactor.

The protein resides in the cellular thylakoid membrane. Its function is as follows. Acts as a processive, ATP-dependent zinc metallopeptidase for both cytoplasmic and membrane proteins. Plays a role in the quality control of integral membrane proteins. Plays a role in the selective replacement of photosystem II (PSII) protein D1 in the PSII repair cycle following visible-light and UV-B induced damage. If damaged D1 is not removed then new D1 cannot be inserted to restore the PSII reaction center. Seems to also degrade damaged and/or unassembled PSII proteins D2 and PsbB (CP47). May recognize D1 via its first 20 amino acids, as deletion of these prevents the PSII repair cycle. Also seems to degrade cytoplasmic GGPS, glucosylglycerol-phosphate synthase. This chain is ATP-dependent zinc metalloprotease FtsH 2 (ftsH2), found in Synechocystis sp. (strain ATCC 27184 / PCC 6803 / Kazusa).